The sequence spans 76 residues: uncharacterized protein (76 aa).

This is an uncharacterized protein from Homo sapiens (Human).